Here is a 149-residue protein sequence, read N- to C-terminus: Nucleoside diphosphate kinase (149 aa).

6 residues coordinate ATP: Lys-11, Phe-59, Arg-87, Thr-93, Arg-104, and Asn-114. The active-site Pros-phosphohistidine intermediate is the His-117.

The protein belongs to the NDK family. As to quaternary structure, homotetramer. Mg(2+) serves as cofactor.

It is found in the cytoplasm. It carries out the reaction a 2'-deoxyribonucleoside 5'-diphosphate + ATP = a 2'-deoxyribonucleoside 5'-triphosphate + ADP. The enzyme catalyses a ribonucleoside 5'-diphosphate + ATP = a ribonucleoside 5'-triphosphate + ADP. Functionally, major role in the synthesis of nucleoside triphosphates other than ATP. The ATP gamma phosphate is transferred to the NDP beta phosphate via a ping-pong mechanism, using a phosphorylated active-site intermediate. This chain is Nucleoside diphosphate kinase, found in Treponema pallidum (strain Nichols).